The chain runs to 177 residues: Cytochrome c-type biogenesis protein CcmE (177 aa).

Residues 1 to 8 (MNPRRKSR) lie on the Cytoplasmic side of the membrane. Residues 9 to 29 (LKVVMAVLSGLAVAVGLTLYA) traverse the membrane as a helical; Signal-anchor for type II membrane protein segment. Residues 30–177 (LSQNIDLFYT…QISQPFGENK (148 aa)) are Periplasmic-facing. 2 residues coordinate heme: histidine 131 and tyrosine 135. Positions 134 to 177 (NYMPPELGDQMKKQHQPMGISEADLKGKSERDATQISQPFGENK) are disordered. Basic and acidic residues predominate over residues 156-166 (ADLKGKSERDA). Polar residues predominate over residues 167–177 (TQISQPFGENK).

The protein belongs to the CcmE/CycJ family.

The protein localises to the cell inner membrane. In terms of biological role, heme chaperone required for the biogenesis of c-type cytochromes. Transiently binds heme delivered by CcmC and transfers the heme to apo-cytochromes in a process facilitated by CcmF and CcmH. In Glaesserella parasuis serovar 5 (strain SH0165) (Haemophilus parasuis), this protein is Cytochrome c-type biogenesis protein CcmE.